Consider the following 300-residue polypeptide: 4-hydroxy-tetrahydrodipicolinate synthase (300 aa).

Thr-53 contributes to the pyruvate binding site. Catalysis depends on Tyr-141, which acts as the Proton donor/acceptor. Catalysis depends on Lys-169, which acts as the Schiff-base intermediate with substrate. Thr-211 is a pyruvate binding site.

The protein belongs to the DapA family. As to quaternary structure, homotetramer; dimer of dimers.

The protein localises to the cytoplasm. The enzyme catalyses L-aspartate 4-semialdehyde + pyruvate = (2S,4S)-4-hydroxy-2,3,4,5-tetrahydrodipicolinate + H2O + H(+). It participates in amino-acid biosynthesis; L-lysine biosynthesis via DAP pathway; (S)-tetrahydrodipicolinate from L-aspartate: step 3/4. Its function is as follows. Catalyzes the condensation of (S)-aspartate-beta-semialdehyde [(S)-ASA] and pyruvate to 4-hydroxy-tetrahydrodipicolinate (HTPA). The protein is 4-hydroxy-tetrahydrodipicolinate synthase of Rickettsia massiliae (strain Mtu5).